We begin with the raw amino-acid sequence, 244 residues long: Lipoprotein-releasing system ATP-binding protein LolD (244 aa).

In terms of domain architecture, ABC transporter spans Ile19 to Val244. Residue Gly55–Ser62 participates in ATP binding.

Belongs to the ABC transporter superfamily. Lipoprotein translocase (TC 3.A.1.125) family. The complex is composed of two ATP-binding proteins (LolD) and two transmembrane proteins (LolC and LolE).

It localises to the cell inner membrane. Its function is as follows. Part of the ABC transporter complex LolCDE involved in the translocation of mature outer membrane-directed lipoproteins, from the inner membrane to the periplasmic chaperone, LolA. Responsible for the formation of the LolA-lipoprotein complex in an ATP-dependent manner. The polypeptide is Lipoprotein-releasing system ATP-binding protein LolD (Xanthomonas oryzae pv. oryzae (strain MAFF 311018)).